Here is a 1858-residue protein sequence, read N- to C-terminus: Protein ROS1C (1858 aa).

Residues 347-356 (TEALKGEDAP) show a composition bias toward basic and acidic residues. 2 disordered regions span residues 347 to 416 (TEAL…AEPF) and 1288 to 1309 (PDTAAQASKPKKSRTTSKKNSE). 2 stretches are compositionally biased toward basic residues: residues 360 to 370 (LKTRRRKHRPK) and 394 to 404 (KPKRKYVRKNR). Positions 1492, 1499, 1502, and 1508 each coordinate [4Fe-4S] cluster.

This sequence belongs to the DNA glycosylase family. DEMETER subfamily. It depends on [4Fe-4S] cluster as a cofactor. Expressed in pistils and immature seeds. Expressed a low levels in roots, leaves and anthers.

It localises to the nucleus. In terms of biological role, bifunctional DNA glycosylase/lyase, which excises 5-methylcytosine (5-meC) and 5-hydroxymethylcytosine (5-hmeC), leaving an apyrimidinic (AP) site that is subsequently incised by the lyase activity. Is responsible for the demethylation of methylated cytosine residues of Tos17 retrotransposon DNA. Demethylation of Tos17 cytosine residues promotes its transposition. May be involved in seed development. This Oryza sativa subsp. japonica (Rice) protein is Protein ROS1C.